We begin with the raw amino-acid sequence, 335 residues long: MGCLLFLLLWALLQAWGSAEVPQRLFPLRCLQISSFANSSWTRTDGLAWLGELQTHSWSNDSDTVRSLKPWSQGTFSDQQWETLQHIFRVYRSSFTRDVKEFAKMLRLSYPLELQVSAGCEVHPGNASNNFFHVAFQGKDILSFQGTSWEPTQEAPLWVNLAIQVLNQDKWTRETVQWLLNGTCPQFVSGLLESGKSELEKQVKPKAWLSRGPSPGPGRLLLVCHVSGFYPKPVWVKWMRGEQEQQDTQPGDILPNADETWYLRATLDVAAGEAAGLSCRVKHSSLEGQDIILYWGGSYTSVGLIVLAVLACLLFLLIVGFTSRFKRQTSYQGVL.

The signal sequence occupies residues 1–19 (MGCLLFLLLWALLQAWGSA). Residues 20–301 (EVPQRLFPLR…ILYWGGSYTS (282 aa)) lie on the Extracellular side of the membrane. Asparagine 38 and asparagine 60 each carry an N-linked (GlcNAc...) asparagine glycan. An a D-galactosylceramide-binding site is contributed by aspartate 98. An N-linked (GlcNAc...) asparagine glycan is attached at asparagine 126. A D-galactosylceramide-binding positions include aspartate 169, 169 to 172 (DKWT), and threonine 172. A glycan (N-linked (GlcNAc...) asparagine) is linked at asparagine 181. Residues 185-292 (PQFVSGLLES…HSSLEGQDII (108 aa)) form the Ig-like domain. A helical transmembrane segment spans residues 302–322 (VGLIVLAVLACLLFLLIVGFT). The Cytoplasmic portion of the chain corresponds to 323–335 (SRFKRQTSYQGVL). Positions 331 to 334 (YQGV) match the Internalization signal motif.

In terms of assembly, heterodimer with B2M (beta-2-microglobulin). Interacts with MHC II.

It is found in the cell membrane. It localises to the basolateral cell membrane. The protein localises to the endosome membrane. Its subcellular location is the lysosome membrane. The protein resides in the endoplasmic reticulum membrane. Its function is as follows. Antigen-presenting protein that binds self and non-self glycolipids and presents them to T-cell receptors on natural killer T-cells. This is Antigen-presenting glycoprotein CD1d (CD1D) from Pan troglodytes (Chimpanzee).